A 335-amino-acid chain; its full sequence is Holliday junction branch migration complex subunit RuvB (335 aa).

The large ATPase domain (RuvB-L) stretch occupies residues 4 to 183; that stretch reads ADNLNVTSII…FGIVQRLEFY (180 aa). Residues Arg-23, Gly-64, Lys-67, Thr-68, Thr-69, 130-132, Arg-173, Tyr-183, and Arg-220 each bind ATP; that span reads EDY. Residue Thr-68 participates in Mg(2+) binding. Residues 184–254 are small ATPAse domain (RuvB-S); that stretch reads PTKDLQNIIS…VAMNALNMLN (71 aa). Residues 257 to 335 form a head domain (RuvB-H) region; that stretch reads TAGFNFMDRQ…HFSLKQSRDI (79 aa). Residues Arg-293, Arg-312, and Arg-317 each contribute to the DNA site.

It belongs to the RuvB family. In terms of assembly, homohexamer. Forms an RuvA(8)-RuvB(12)-Holliday junction (HJ) complex. HJ DNA is sandwiched between 2 RuvA tetramers; dsDNA enters through RuvA and exits via RuvB. An RuvB hexamer assembles on each DNA strand where it exits the tetramer. Each RuvB hexamer is contacted by two RuvA subunits (via domain III) on 2 adjacent RuvB subunits; this complex drives branch migration. In the full resolvosome a probable DNA-RuvA(4)-RuvB(12)-RuvC(2) complex forms which resolves the HJ.

It localises to the cytoplasm. It catalyses the reaction ATP + H2O = ADP + phosphate + H(+). The RuvA-RuvB-RuvC complex processes Holliday junction (HJ) DNA during genetic recombination and DNA repair, while the RuvA-RuvB complex plays an important role in the rescue of blocked DNA replication forks via replication fork reversal (RFR). RuvA specifically binds to HJ cruciform DNA, conferring on it an open structure. The RuvB hexamer acts as an ATP-dependent pump, pulling dsDNA into and through the RuvAB complex. RuvB forms 2 homohexamers on either side of HJ DNA bound by 1 or 2 RuvA tetramers; 4 subunits per hexamer contact DNA at a time. Coordinated motions by a converter formed by DNA-disengaged RuvB subunits stimulates ATP hydrolysis and nucleotide exchange. Immobilization of the converter enables RuvB to convert the ATP-contained energy into a lever motion, pulling 2 nucleotides of DNA out of the RuvA tetramer per ATP hydrolyzed, thus driving DNA branch migration. The RuvB motors rotate together with the DNA substrate, which together with the progressing nucleotide cycle form the mechanistic basis for DNA recombination by continuous HJ branch migration. Branch migration allows RuvC to scan DNA until it finds its consensus sequence, where it cleaves and resolves cruciform DNA. The polypeptide is Holliday junction branch migration complex subunit RuvB (Baumannia cicadellinicola subsp. Homalodisca coagulata).